Here is a 240-residue protein sequence, read N- to C-terminus: MSGKPAYKRVLLKASGEALMGSQGFGIDVSVADRIANDIKQARSLGVEVGVVIGGGNIFRGVAVASKGGDRVTGDHMGMLATVINSLALRTSLHKIGVDSVVLSAIAMPEICESFSQRQATAYMDEGKVVIFAGGTGNPFFTTDSAAALRAAEIEADALLKGTQVDGIYSADPKKDPNATRFDSLTHKEVLDRGLAVMDTAAVALARENNIPIIVYSIHENGGLAEILQGKGRCTIVSDN.

13 to 16 (KASG) serves as a coordination point for ATP. An involved in allosteric activation by GTP region spans residues 21–26 (GSQGFG). Gly-55 provides a ligand contact to UMP. The ATP site is built by Gly-56 and Arg-60. UMP is bound by residues Asp-75 and 136 to 143 (TGNPFFTT). Residues Thr-163, Gln-164, Tyr-169, and Asp-172 each coordinate ATP.

The protein belongs to the UMP kinase family. As to quaternary structure, homohexamer.

The protein localises to the cytoplasm. The catalysed reaction is UMP + ATP = UDP + ADP. Its pathway is pyrimidine metabolism; CTP biosynthesis via de novo pathway; UDP from UMP (UMPK route): step 1/1. With respect to regulation, allosterically activated by GTP. Inhibited by UTP. In terms of biological role, catalyzes the reversible phosphorylation of UMP to UDP. In Brucella anthropi (strain ATCC 49188 / DSM 6882 / CCUG 24695 / JCM 21032 / LMG 3331 / NBRC 15819 / NCTC 12168 / Alc 37) (Ochrobactrum anthropi), this protein is Uridylate kinase.